The sequence spans 428 residues: MKKPFYKVLYVQVIFAIVVGVLLGHLYPSLAVDMKPLGDGFIKLIKMVIGPIIFCTVVTGIAGMQDMKKVGRVGGKALLYFEIVSTFALVLGLAATHILRPGVGFNIDPATLNGKEVASYAAKAHGQSTVDFLMHIIPNTMIDAFAQGEILQILLIALLFGSVLAHLGERGRVVTDFIDGITRVLFGIVHIVTKLAPVGAFGAMAFTIGKYGVGSLVPLLKLIGTFYLTSVVFVLVVLGAIARFTGFSIVRFVGYIKEELLIVLGTSSSEAALPQLMEKLEKAGCSRSVVGLVVPTGYSFNLDGTNIYMTMAVLFIAQATNIELTWMQQLTLLAVAMLTSKGASGVTGAGFITLAATLAVVPTIPLSGMVLILGIDRFMSECRALTNIVGNGVATVVVSAWEKELDRAKLHAALSGNGKAAAGEAARV.

8 consecutive transmembrane segments (helical) span residues 8–28 (VLYV…HLYP), 44–64 (LIKM…IAGM), 78–98 (LLYF…ATHI), 148–168 (GEIL…AHLG), 184–204 (VLFG…FGAM), 222–242 (LIGT…GAIA), 307–327 (IYMT…LTWM), and 355–375 (AATL…ILGI).

It belongs to the dicarboxylate/amino acid:cation symporter (DAACS) (TC 2.A.23) family.

The protein resides in the cell inner membrane. Its function is as follows. Responsible for the transport of dicarboxylates such as succinate, fumarate, and malate from the periplasm across the membrane. This Burkholderia thailandensis (strain ATCC 700388 / DSM 13276 / CCUG 48851 / CIP 106301 / E264) protein is C4-dicarboxylate transport protein.